Reading from the N-terminus, the 245-residue chain is rRNA adenine N-6-methyltransferase (245 aa).

The S-adenosyl-L-methionine site is built by Asn10, Leu12, Gly37, Glu58, Asp83, and Asn100.

It belongs to the class I-like SAM-binding methyltransferase superfamily. rRNA adenine N(6)-methyltransferase family.

The enzyme catalyses adenosine(2085) in 23S rRNA + 2 S-adenosyl-L-methionine = N(6)-dimethyladenosine(2085) in 23S rRNA + 2 S-adenosyl-L-homocysteine + 2 H(+). This protein produces a dimethylation of the adenine residue at position 2085 in 23S rRNA, resulting in reduced affinity between ribosomes and macrolide-lincosamide-streptogramin B antibiotics. The chain is rRNA adenine N-6-methyltransferase (ermBC) from Escherichia coli.